Consider the following 393-residue polypeptide: Methylthioribose kinase (393 aa).

ATP is bound by residues N38, K53, and 107-109 (EDL). D225 serves as a coordination point for substrate. 242–244 (DPE) is a binding site for ATP. R332 is a binding site for substrate.

Belongs to the methylthioribose kinase family. In terms of assembly, homodimer.

It catalyses the reaction 5-(methylsulfanyl)-D-ribose + ATP = 5-(methylsulfanyl)-alpha-D-ribose 1-phosphate + ADP + H(+). It participates in amino-acid biosynthesis; L-methionine biosynthesis via salvage pathway; S-methyl-5-thio-alpha-D-ribose 1-phosphate from S-methyl-5'-thioadenosine (hydrolase route): step 2/2. In terms of biological role, catalyzes the phosphorylation of methylthioribose into methylthioribose-1-phosphate. The polypeptide is Methylthioribose kinase (Bacillus cereus (strain ATCC 14579 / DSM 31 / CCUG 7414 / JCM 2152 / NBRC 15305 / NCIMB 9373 / NCTC 2599 / NRRL B-3711)).